A 247-amino-acid polypeptide reads, in one-letter code: Cationic trypsin-3 (247 aa).

An N-terminal signal peptide occupies residues 1 to 15 (MKALIFLAFLGAAVA). The propeptide at 16 to 24 (LPLDDDDDK) is activation peptide. In terms of domain architecture, Peptidase S1 spans 25-245 (IVGGYTCQKN…YVNWIQQTVA (221 aa)). 6 disulfides stabilise this stretch: Cys-31/Cys-161, Cys-49/Cys-65, Cys-133/Cys-234, Cys-140/Cys-207, Cys-172/Cys-186, and Cys-197/Cys-221. His-64 serves as the catalytic Charge relay system. Residues Glu-76, Asn-78, Val-81, and Glu-86 each contribute to the Ca(2+) site. Asp-108 acts as the Charge relay system in catalysis. Residue Ser-201 is the Charge relay system of the active site.

It belongs to the peptidase S1 family. Ca(2+) is required as a cofactor.

The protein resides in the secreted. It localises to the extracellular space. The enzyme catalyses Preferential cleavage: Arg-|-Xaa, Lys-|-Xaa.. The sequence is that of Cationic trypsin-3 (Try3) from Rattus norvegicus (Rat).